Here is a 427-residue protein sequence, read N- to C-terminus: Serine--tRNA ligase (427 aa).

Residue 230 to 232 participates in L-serine binding; it reads TSE. ATP-binding positions include 260 to 262 and Val276; that span reads RRE. Glu283 lines the L-serine pocket. 347 to 350 contributes to the ATP binding site; it reads ELTS. Thr387 serves as a coordination point for L-serine.

Belongs to the class-II aminoacyl-tRNA synthetase family. Type-1 seryl-tRNA synthetase subfamily. As to quaternary structure, homodimer. The tRNA molecule binds across the dimer.

It localises to the cytoplasm. It carries out the reaction tRNA(Ser) + L-serine + ATP = L-seryl-tRNA(Ser) + AMP + diphosphate + H(+). It catalyses the reaction tRNA(Sec) + L-serine + ATP = L-seryl-tRNA(Sec) + AMP + diphosphate + H(+). Its pathway is aminoacyl-tRNA biosynthesis; selenocysteinyl-tRNA(Sec) biosynthesis; L-seryl-tRNA(Sec) from L-serine and tRNA(Sec): step 1/1. Its function is as follows. Catalyzes the attachment of serine to tRNA(Ser). Is also able to aminoacylate tRNA(Sec) with serine, to form the misacylated tRNA L-seryl-tRNA(Sec), which will be further converted into selenocysteinyl-tRNA(Sec). This Micrococcus luteus (strain ATCC 4698 / DSM 20030 / JCM 1464 / CCM 169 / CCUG 5858 / IAM 1056 / NBRC 3333 / NCIMB 9278 / NCTC 2665 / VKM Ac-2230) (Micrococcus lysodeikticus) protein is Serine--tRNA ligase.